The chain runs to 364 residues: Methylthioribose-1-phosphate isomerase (364 aa).

Residues 51–53 (RGA), Arg-88, and Gln-199 each bind substrate. The active-site Proton donor is Asp-240. 250 to 251 (NK) lines the substrate pocket.

Belongs to the eIF-2B alpha/beta/delta subunits family. MtnA subfamily.

The catalysed reaction is 5-(methylsulfanyl)-alpha-D-ribose 1-phosphate = 5-(methylsulfanyl)-D-ribulose 1-phosphate. Its pathway is amino-acid biosynthesis; L-methionine biosynthesis via salvage pathway; L-methionine from S-methyl-5-thio-alpha-D-ribose 1-phosphate: step 1/6. Its function is as follows. Catalyzes the interconversion of methylthioribose-1-phosphate (MTR-1-P) into methylthioribulose-1-phosphate (MTRu-1-P). This is Methylthioribose-1-phosphate isomerase from Cereibacter sphaeroides (strain KD131 / KCTC 12085) (Rhodobacter sphaeroides).